The chain runs to 673 residues: Thimet-like oligopeptidase (673 aa).

His-465 is a Zn(2+) binding site. Residue Glu-466 is part of the active site. Positions 469 and 472 each coordinate Zn(2+).

The protein belongs to the peptidase M3 family. Zn(2+) serves as cofactor.

The polypeptide is Thimet-like oligopeptidase (Dictyostelium discoideum (Social amoeba)).